The sequence spans 408 residues: UDP-N-acetylglucosamine--N-acetylmuramyl-(pentapeptide) pyrophosphoryl-undecaprenol N-acetylglucosamine transferase (408 aa).

Residues 1-20 (MNDTVKKPTGGRGDDPLPAG) form a disordered region. UDP-N-acetyl-alpha-D-glucosamine contacts are provided by residues 41 to 43 (TAG), Asn160, Arg197, Ser231, and Gln327.

This sequence belongs to the glycosyltransferase 28 family. MurG subfamily.

It localises to the cell membrane. The catalysed reaction is di-trans,octa-cis-undecaprenyl diphospho-N-acetyl-alpha-D-muramoyl-L-alanyl-D-glutamyl-meso-2,6-diaminopimeloyl-D-alanyl-D-alanine + UDP-N-acetyl-alpha-D-glucosamine = di-trans,octa-cis-undecaprenyl diphospho-[N-acetyl-alpha-D-glucosaminyl-(1-&gt;4)]-N-acetyl-alpha-D-muramoyl-L-alanyl-D-glutamyl-meso-2,6-diaminopimeloyl-D-alanyl-D-alanine + UDP + H(+). Its pathway is cell wall biogenesis; peptidoglycan biosynthesis. Functionally, cell wall formation. Catalyzes the transfer of a GlcNAc subunit on undecaprenyl-pyrophosphoryl-MurNAc-pentapeptide (lipid intermediate I) to form undecaprenyl-pyrophosphoryl-MurNAc-(pentapeptide)GlcNAc (lipid intermediate II). This Mycolicibacterium paratuberculosis (strain ATCC BAA-968 / K-10) (Mycobacterium paratuberculosis) protein is UDP-N-acetylglucosamine--N-acetylmuramyl-(pentapeptide) pyrophosphoryl-undecaprenol N-acetylglucosamine transferase.